The chain runs to 232 residues: Cell surface superoxide dismutase [Cu-Zn] 4 (232 aa).

The signal sequence occupies residues 1–15 (MKYLSIISIVALALA). An N-linked (GlcNAc...) asparagine glycan is attached at N53. Cu cation contacts are provided by H75 and H77. An N-linked (GlcNAc...) asparagine glycan is attached at N86. H93 serves as a coordination point for Cu cation. H93 is a Zn(2+) binding site. An N-linked (GlcNAc...) asparagine glycan is attached at N98. D113 contacts Zn(2+). A glycan (N-linked (GlcNAc...) asparagine) is linked at N120. H153 is a binding site for Cu cation. 5 N-linked (GlcNAc...) asparagine glycosylation sites follow: N156, N164, N182, N193, and N196. A compositionally biased stretch (low complexity) spans 174–208 (TASAATWSNSSSSSSSSSKNSTNGSSGSSTSASQG). The tract at residues 174 to 211 (TASAATWSNSSSSSSSSSKNSTNGSSGSSTSASQGSGA) is disordered. Residue S209 is the site of GPI-anchor amidated serine attachment. Residues 210–232 (GAGRAEISGFLAAGIAGVVAALI) constitute a propeptide, removed in mature form. Residue R213 participates in substrate binding.

This sequence belongs to the Cu-Zn superoxide dismutase family. Cu cation is required as a cofactor. The cofactor is Zn(2+). Post-translationally, the GPI-anchor is attached to the protein in the endoplasmic reticulum and serves to target the protein to the cell surface. There, the glucosamine-inositol phospholipid moiety is cleaved off and the GPI-modified mannoprotein is covalently attached via its lipidless GPI glycan remnant to the 1,6-beta-glucan of the outer cell wall layer.

The protein resides in the secreted. Its subcellular location is the cell wall. It localises to the membrane. The enzyme catalyses 2 superoxide + 2 H(+) = H2O2 + O2. Its function is as follows. Superoxide dismutases serve to convert damaging superoxide radicals, a key form of ROS, to less damaging hydrogen peroxide that can be converted into water by catalase action. Degrades host-derived reactive oxygen species to escape innate immune surveillance. Involved in the occurrence of miconazole-tolerant persisters in biofilms. Persisters are cells that survive high doses of an antimicrobial agent. This Candida albicans (strain SC5314 / ATCC MYA-2876) (Yeast) protein is Cell surface superoxide dismutase [Cu-Zn] 4 (SOD4).